Consider the following 134-residue polypeptide: Probable glycine cleavage system H protein (134 aa).

A Lipoyl-binding domain is found at 29 to 110 (TVLVGITDYA…PYENWIAKLK (82 aa)). Lysine 70 is subject to N6-lipoyllysine.

The protein belongs to the GcvH family. The glycine cleavage system is composed of four proteins: P, T, L and H. The cofactor is (R)-lipoate.

Its function is as follows. The glycine cleavage system catalyzes the degradation of glycine. The H protein shuttles the methylamine group of glycine from the P protein to the T protein. The protein is Probable glycine cleavage system H protein of Thermococcus gammatolerans (strain DSM 15229 / JCM 11827 / EJ3).